A 387-amino-acid polypeptide reads, in one-letter code: MKIRAALALSATASGVLAAVVPQQALLNNPQIHHENEKYLIELAPYQTRWVTEEEKWALKLDGVNFIDITEERNPGFYPTLHQASNVRYPTKMEHVEEVVGLTHRLTKANMERDLEKFTSFHTRYYKSQTGIESATWLYNQVQTVIEQSGAAEHGATVDRFAHSWGQFSIIARIPGKSNKTVVLGAHQDSINLFLPSILAAPGADDDGSGTVTILEALRGLLQSDTVAQGKAPNTIEFHWYSAEEGGMLGSQAIFSQYKQERRDIKAMLQQDMTGYVQGALNAGRKEAVGIMIDYVDRGLTQFLKDVVTAYCNVGYLETKCGYACSDHTSASKYGYPSAMATEAEMENTNKRIHTTDDRIKYLSFDHMLEHAKLTLGFAYELAFASF.

An N-terminal signal peptide occupies residues 1 to 18 (MKIRAALALSATASGVLA). A propeptide spanning residues 19–87 (AVVPQQALLN…YPTLHQASNV (69 aa)) is cleaved from the precursor. N-linked (GlcNAc...) asparagine glycosylation is present at Asn-179. Zn(2+)-binding residues include His-187, Asp-206, Glu-245, and Asp-272. A disulfide bridge links Cys-321 with Cys-325. His-354 lines the Zn(2+) pocket.

This sequence belongs to the peptidase M28 family. M28E subfamily. Monomer. The cofactor is Zn(2+).

Its subcellular location is the secreted. In terms of biological role, extracellular aminopeptidase that allows assimilation of proteinaceous substrates. This is Leucine aminopeptidase 1 (lap1) from Aspergillus oryzae (strain ATCC 42149 / RIB 40) (Yellow koji mold).